A 695-amino-acid polypeptide reads, in one-letter code: Pentatricopeptide repeat-containing protein 1, mitochondrial (695 aa).

PPR repeat units lie at residues 133 to 169 (TQYWYFFQCKRLIKEGKLAEALDLFERQMLKEERLQP), 170 to 204 (LECNYTVLIGGCGRVGYLKKAFRLFNDMKKRDLEP), 205 to 243 (SDATYTALFNVCAESPWKDSALQSALKLRQQLQARNFQL), 244 to 278 (NLKTYHALLKVAAKCADLRLCLDVFKEIIQRGHAV), 279 to 315 (TEETFCFLLVGCIQDKKTGFRQAMQVWRQMLSLGIKP), and 316 to 352 (SRHGYNLLLEAARDCGLGDPEVASRLLLTSQEETILL). The interval 391-416 (QKLEGPPALPEARVTSRTQPEVETTA) is disordered. PPR repeat units lie at residues 470–485 (EGFLGKMTEHGLQPDI), 517–551 (DVTFFNTLIRKKSKLGDLEGAKALLPILAKKGIVP), 552–583 (NLRTFCNLAIGCHRPRDGMQLLADMKKSQVSP), and 584–618 (NIHIYSTLINAALKKLDYTYLISILKDMRQNSVPV). The interval 672 to 695 (WQEFQNKPVGDQDTTDKAGGLRDG) is disordered. A compositionally biased stretch (basic and acidic residues) spans 685 to 695 (TTDKAGGLRDG).

Belongs to the PTCD1 family. Associates with mitochondrial leucine tRNAs. Interacts with ELAC2.

It is found in the mitochondrion. The protein localises to the mitochondrion matrix. Functionally, mitochondrial protein implicated in negative regulation of leucine tRNA levels, as well as negative regulation of mitochondria-encoded proteins and COX activity. Also affects the 3'-processing of mitochondrial tRNAs. The polypeptide is Pentatricopeptide repeat-containing protein 1, mitochondrial (Ptcd1) (Mus musculus (Mouse)).